Here is a 215-residue protein sequence, read N- to C-terminus: MGQKINPTGFRLSVLKNWSSRWYTNTKKFSDFLNEDISVRQYLQKKLAHASVGSIIIERPSKNAKITIHTSRPGVVIGKKGEDIEILRRNVEKLMNVPVHINIEEIRKPEIDAQLIAASITQQLEKRIMFRRAMKRAIQNAMRLGAQGIKIMSSGRLNGIEIARTEWYREGRVPLHTLRAEVDYGTSEARTTYGIIGVKVWVFKGEQLGIKERQN.

A KH type-2 domain is found at Val-39–Arg-107.

The protein belongs to the universal ribosomal protein uS3 family. As to quaternary structure, part of the 30S ribosomal subunit. Forms a tight complex with proteins S10 and S14.

Binds the lower part of the 30S subunit head. Binds mRNA in the 70S ribosome, positioning it for translation. This is Small ribosomal subunit protein uS3 from Nitrosomonas europaea (strain ATCC 19718 / CIP 103999 / KCTC 2705 / NBRC 14298).